The primary structure comprises 90 residues: Small ribosomal subunit protein uS15 (90 aa).

Belongs to the universal ribosomal protein uS15 family. As to quaternary structure, part of the 30S ribosomal subunit. Forms a bridge to the 50S subunit in the 70S ribosome, contacting the 23S rRNA.

In terms of biological role, one of the primary rRNA binding proteins, it binds directly to 16S rRNA where it helps nucleate assembly of the platform of the 30S subunit by binding and bridging several RNA helices of the 16S rRNA. Forms an intersubunit bridge (bridge B4) with the 23S rRNA of the 50S subunit in the ribosome. This chain is Small ribosomal subunit protein uS15, found in Helicobacter pylori (strain HPAG1).